The following is a 294-amino-acid chain: Nucleotide-binding protein CLB_3433 (294 aa).

8 to 15 (GLSGAGKT) is a binding site for ATP. 59–62 (DIRG) contributes to the GTP binding site.

The protein belongs to the RapZ-like family.

Its function is as follows. Displays ATPase and GTPase activities. The chain is Nucleotide-binding protein CLB_3433 from Clostridium botulinum (strain ATCC 19397 / Type A).